A 309-amino-acid chain; its full sequence is Porphobilinogen deaminase (309 aa).

C242 carries the post-translational modification S-(dipyrrolylmethanemethyl)cysteine.

The protein belongs to the HMBS family. Monomer. Requires dipyrromethane as cofactor.

The catalysed reaction is 4 porphobilinogen + H2O = hydroxymethylbilane + 4 NH4(+). Its pathway is porphyrin-containing compound metabolism; protoporphyrin-IX biosynthesis; coproporphyrinogen-III from 5-aminolevulinate: step 2/4. Its function is as follows. Tetrapolymerization of the monopyrrole PBG into the hydroxymethylbilane pre-uroporphyrinogen in several discrete steps. This chain is Porphobilinogen deaminase, found in Legionella pneumophila subsp. pneumophila (strain Philadelphia 1 / ATCC 33152 / DSM 7513).